The chain runs to 285 residues: Glutamate racemase (285 aa).

Residues Asp30–Ser31 and Tyr62–Gly63 each bind substrate. Cys94 serves as the catalytic Proton donor/acceptor. Asn95 to Thr96 contributes to the substrate binding site. Cys206 acts as the Proton donor/acceptor in catalysis. Thr207 to His208 contributes to the substrate binding site.

Belongs to the aspartate/glutamate racemases family.

The catalysed reaction is L-glutamate = D-glutamate. Its pathway is cell wall biogenesis; peptidoglycan biosynthesis. Its function is as follows. Provides the (R)-glutamate required for cell wall biosynthesis. This is Glutamate racemase from Pectobacterium atrosepticum (strain SCRI 1043 / ATCC BAA-672) (Erwinia carotovora subsp. atroseptica).